The chain runs to 165 residues: Ribosome maturation factor RimM (165 aa).

Positions 94-165 (EDEFYIADLN…YVILNYQTKV (72 aa)) constitute a PRC barrel domain.

This sequence belongs to the RimM family. As to quaternary structure, binds ribosomal protein uS19.

It localises to the cytoplasm. In terms of biological role, an accessory protein needed during the final step in the assembly of 30S ribosomal subunit, possibly for assembly of the head region. Essential for efficient processing of 16S rRNA. May be needed both before and after RbfA during the maturation of 16S rRNA. It has affinity for free ribosomal 30S subunits but not for 70S ribosomes. The polypeptide is Ribosome maturation factor RimM (Rickettsia prowazekii (strain Madrid E)).